A 625-amino-acid chain; its full sequence is Probable potassium transport system protein Kup (625 aa).

Transmembrane regions (helical) follow at residues Thr13–Leu33, Ile53–Val73, Ile103–Thr123, Val141–Gln161, Phe172–Ile192, Ala206–Leu226, Trp250–Leu270, Leu282–Ile302, Ile340–Phe360, Ala369–Ile389, Val400–Leu420, and Ile422–Thr442.

The protein belongs to the HAK/KUP transporter (TC 2.A.72) family.

The protein localises to the cell inner membrane. The enzyme catalyses K(+)(in) + H(+)(in) = K(+)(out) + H(+)(out). Its function is as follows. Transport of potassium into the cell. Likely operates as a K(+):H(+) symporter. This chain is Probable potassium transport system protein Kup, found in Acinetobacter baumannii (strain SDF).